A 246-amino-acid polypeptide reads, in one-letter code: Small ribosomal subunit protein uS2 (246 aa).

Positions 225–246 (SKSSASVPNKDEYVAAEDGAAE) are disordered.

Belongs to the universal ribosomal protein uS2 family.

This Cellvibrio japonicus (strain Ueda107) (Pseudomonas fluorescens subsp. cellulosa) protein is Small ribosomal subunit protein uS2.